The following is a 115-amino-acid chain: Large ribosomal subunit protein bL20c (115 aa).

It belongs to the bacterial ribosomal protein bL20 family.

The protein localises to the plastid. It is found in the chloroplast. Binds directly to 23S ribosomal RNA and is necessary for the in vitro assembly process of the 50S ribosomal subunit. It is not involved in the protein synthesizing functions of that subunit. The protein is Large ribosomal subunit protein bL20c of Gnetum parvifolium (Small-leaved jointfir).